We begin with the raw amino-acid sequence, 260 residues long: F-actin-capping protein subunit beta (260 aa).

This sequence belongs to the F-actin-capping protein beta subunit family. In terms of assembly, component of the F-actin capping complex, composed of a heterodimer of an alpha and a beta subunit.

It is found in the cytoplasm. It localises to the cytoskeleton. The protein localises to the actin patch. F-actin-capping proteins bind in a Ca(2+)-independent manner to the fast growing ends of actin filaments (barbed end) thereby blocking the exchange of subunits at these ends. Unlike other capping proteins (such as gelsolin and severin), these proteins do not sever actin filaments. This is F-actin-capping protein subunit beta (CAP2) from Yarrowia lipolytica (strain CLIB 122 / E 150) (Yeast).